The following is a 615-amino-acid chain: DNA mismatch repair protein MutL (615 aa).

Positions 378-391 (PAPASGSRPAAPWP) are enriched in low complexity. Positions 378–397 (PAPASGSRPAAPWPNAQPGY) are disordered.

Belongs to the DNA mismatch repair MutL/HexB family.

Its function is as follows. This protein is involved in the repair of mismatches in DNA. It is required for dam-dependent methyl-directed DNA mismatch repair. May act as a 'molecular matchmaker', a protein that promotes the formation of a stable complex between two or more DNA-binding proteins in an ATP-dependent manner without itself being part of a final effector complex. This Escherichia coli O127:H6 (strain E2348/69 / EPEC) protein is DNA mismatch repair protein MutL.